The primary structure comprises 331 residues: Type 2 lactosamine alpha-2,3-sialyltransferase (331 aa).

At 1–4 (MRGY) the chain is on the cytoplasmic side. A helical; Signal-anchor for type II membrane protein membrane pass occupies residues 5–25 (LVAIFLSAVFLYYVLHCILWG). Over 26 to 331 (TNVYWVAPVE…KNLVINLTQD (306 aa)) the chain is Lumenal. Asn-129, Asn-181, Asn-282, Asn-295, Asn-308, and Asn-327 each carry an N-linked (GlcNAc...) asparagine glycan.

The protein belongs to the glycosyltransferase 29 family.

Its subcellular location is the golgi apparatus membrane. The catalysed reaction is a neolactoside nLc4Cer(d18:1(4E)) + CMP-N-acetyl-beta-neuraminate = a neolactoside IV(3)-alpha-NeuAc-nLc4Cer(d18:1(4E)) + CMP + H(+). The enzyme catalyses a beta-D-galactosyl-(1-&gt;4)-N-acetyl-beta-D-glucosaminyl derivative + CMP-N-acetyl-beta-neuraminate = an N-acetyl-alpha-neuraminyl-(2-&gt;3)-beta-D-galactosyl-(1-&gt;4)-N-acetyl-beta-D-glucosaminyl derivative + CMP + H(+). It catalyses the reaction a neolactoside nLc6Cer(d18:1(4E)) + CMP-N-acetyl-beta-neuraminate = a neolactoside VI(3)-alpha-NeuNAc-nLc6Cer(d18:1(4E)) + CMP + H(+). Functionally, transfers the sialyl residue from CMP-N-acetyl-beta-neuraminate to the terminal galactose residue on sugar chains of glycoproteins and glycolipids. It's alpha-2,3-sialyltransferase activity is specific toward type II glycan chains (Galbeta1-4GlcNAc) on glycoproteins and glycolipids such as neolactosides nLc4Cer and nLc6Cer, whose sialyl-products serve as precursors for the Lewis X antigen. Critically involved in the synthesis of functional selectin ligands needed for neutrophil recruitment during inflammation and lymphocyte homing to the lymph nodes. The sequence is that of Type 2 lactosamine alpha-2,3-sialyltransferase (ST3GAL6) from Pan troglodytes (Chimpanzee).